We begin with the raw amino-acid sequence, 139 residues long: uncharacterized protein (139 aa).

Residues 83 to 109 (LIPPKKTSPATSSSLKPPRRPRGCLNG) form a disordered region. The segment covering 86–98 (PKKTSPATSSSLK) has biased composition (low complexity).

The protein to M.pneumoniae MPN_091 and MPN_463.

This is an uncharacterized protein from Mycoplasma pneumoniae (strain ATCC 29342 / M129 / Subtype 1) (Mycoplasmoides pneumoniae).